We begin with the raw amino-acid sequence, 64 residues long: Large ribosomal subunit protein bL35 (64 aa).

It belongs to the bacterial ribosomal protein bL35 family.

The polypeptide is Large ribosomal subunit protein bL35 (Shewanella frigidimarina (strain NCIMB 400)).